The sequence spans 296 residues: Probable cell wall protein PGA41 (296 aa).

Positions 1 to 18 (MKFTIVLFTLISVTVAAA) are cleaved as a signal peptide. Residues 146 to 212 (IASSTKESSS…ITTISSDSST (67 aa)) are compositionally biased toward low complexity. The tract at residues 146 to 276 (IASSTKESSS…PNSSQTAPGA (131 aa)) is disordered. Residues 220 to 245 (QGGGGNSGNNGSNGDGGNDASGGGGV) show a composition bias toward gly residues. Residues N229 and N268 are each glycosylated (N-linked (GlcNAc...) asparagine). Positions 247–274 (NENEQASSPPSSQSSTNSNQPNSSQTAP) are enriched in low complexity. G275 carries GPI-anchor amidated glycine lipidation. A propeptide spans 276–296 (AANYLSSVSVGTLMILVLGLI) (removed in mature form).

The protein belongs to the IHD1 family. Post-translationally, the GPI-anchor is attached to the protein in the endoplasmic reticulum and serves to target the protein to the cell surface. There, the glucosamine-inositol phospholipid moiety is cleaved off and the GPI-modified mannoprotein is covalently attached via its lipidless GPI glycan remnant to the 1,6-beta-glucan of the outer cell wall layer.

The protein resides in the secreted. It is found in the cell wall. The protein localises to the membrane. In terms of biological role, probable GPI-anchored cell wall protein that may be involved in cell wall organization, hyphal growth, as well as in virulence. This chain is Probable cell wall protein PGA41 (PGA41), found in Candida albicans (strain SC5314 / ATCC MYA-2876) (Yeast).